The following is a 275-amino-acid chain: Translation initiation factor 2 subunit alpha (275 aa).

Residues 12 to 83 (GEFVIATVKS…NKGHIDLSLK (72 aa)) enclose the S1 motif domain.

It belongs to the eIF-2-alpha family. As to quaternary structure, heterotrimer composed of an alpha, a beta and a gamma chain.

Functionally, eIF-2 functions in the early steps of protein synthesis by forming a ternary complex with GTP and initiator tRNA. This chain is Translation initiation factor 2 subunit alpha, found in Thermococcus onnurineus (strain NA1).